The following is a 102-amino-acid chain: Small ribosomal subunit protein uS10 (102 aa).

Belongs to the universal ribosomal protein uS10 family. As to quaternary structure, part of the 30S ribosomal subunit.

Functionally, involved in the binding of tRNA to the ribosomes. The sequence is that of Small ribosomal subunit protein uS10 from Pelotomaculum thermopropionicum (strain DSM 13744 / JCM 10971 / SI).